A 225-amino-acid polypeptide reads, in one-letter code: Glutathione S-transferase Mu 5 (225 aa).

The GST N-terminal domain maps to 5-92; it reads KSMVLGYWDI…YIARKHNMCG (88 aa). The residue at position 6 (S6) is a Phosphoserine. Residues 11 to 12, 50 to 54, 63 to 64, and 76 to 77 contribute to the glutathione site; these read YW, WLDVK, NL, and QS. In terms of domain architecture, GST C-terminal spans 94–212; it reads TEEEKIRVDI…QSDRCFKMPI (119 aa). Y120 provides a ligand contact to substrate.

This sequence belongs to the GST superfamily. Mu family. Homodimer. The N-terminus is blocked. In terms of tissue distribution, expressed in testis and brain. Very low expression in liver, kidney, heart and lung.

The protein localises to the cytoplasm. The catalysed reaction is RX + glutathione = an S-substituted glutathione + a halide anion + H(+). In terms of biological role, conjugation of reduced glutathione to a wide number of exogenous and endogenous hydrophobic electrophiles. The sequence is that of Glutathione S-transferase Mu 5 (Gstm5) from Rattus norvegicus (Rat).